The chain runs to 477 residues: MLGVLRIQGALASAGQARLLSVRLLASKSTTDMTTNRGESTQSTSTEHFDIIIGGGGLVGTTLAAALAKNSTLADKKVLLLEGAPEFRGFNPTGPYQNRVSAINHNSIELFKSIDAWKHIESARYKPVKQMQVWESNTDALIQFQHDNFASDVACIIENDLILDAVYALAKESPNVEILNKARIQCVRLPRDSNSNHSELQLEDGRNFSCDLLIGADGANSVVRKEMNVDVFSLNYDRMGLVATLELGEDACDNSVAWQRFLPNGPVALLPLTDRLSSLVWSTTNEQAKMLQALPPTEFVDALNEAFCRQYPRVELADKAVQALNSLFGHNGSQHQVQYPPRVCGVLDKSRATFPLGFLHASSYVCNGAALVGDAAHRVHPLAGQGVNLGFSDVRYLVESLAAGAYAGFKLGDKQHLIKYERKCLAKNVPIMLGVHGLHTLYATQFSPVVLLRSLGLQLTQNLPPVKNLFMRGAMGQ.

Residues 1 to 25 (MLGVLRIQGALASAGQARLLSVRLL) constitute a mitochondrion transit peptide.

This sequence belongs to the UbiH/COQ6 family. In terms of assembly, component of a multi-subunit COQ enzyme complex. It depends on FAD as a cofactor.

The protein resides in the mitochondrion inner membrane. The enzyme catalyses a 4-hydroxy-3-(all-trans-polyprenyl)benzoate + 2 reduced [2Fe-2S]-[ferredoxin] + O2 + 2 H(+) = a 3,4-dihydroxy-5-(all-trans-polyprenyl)benzoate + 2 oxidized [2Fe-2S]-[ferredoxin] + H2O. It carries out the reaction a 2-methoxy-6-(all-trans-polyprenyl)phenol + 2 reduced [2Fe-2S]-[ferredoxin] + O2 + 2 H(+) = a 2-methoxy-6-(all-trans-polyprenyl)benzene-1,4-diol + 2 oxidized [2Fe-2S]-[ferredoxin] + H2O. It functions in the pathway cofactor biosynthesis; ubiquinone biosynthesis. In terms of biological role, FAD-dependent monooxygenase required for two non-consecutive steps during ubiquinone biosynthesis. Required for the C5-ring hydroxylation during ubiquinone biosynthesis by catalyzing the hydroxylation of 4-hydroxy-3-(all-trans-polyprenyl)benzoic acid to 3,4-dihydroxy-5-(all-trans-polyprenyl)benzoic acid. Also acts downstream of coq4, for the C1-hydroxylation during ubiquinone biosynthesis by catalyzing the hydroxylation of 2-methoxy-6-(all-trans-polyprenyl)phenol to 2-methoxy-6-(all-trans-polyprenyl)benzene-1,4-diol. The electrons required for the hydroxylation reaction are funneled indirectly to Coq6 from NADPH via a ferredoxin/ferredoxin reductase system. The protein is Ubiquinone biosynthesis monooxygenase COQ6, mitochondrial of Drosophila melanogaster (Fruit fly).